The following is a 431-amino-acid chain: MGKNVVVLGTQWGDEGKGKVVDLLTESAATVVRFQGGHNAGHTLVIDGEKTVLHLIPSGVLRADKTCVIGNGVVLSPEALMDEIRELEAKGVPVRERLRLSPACPLILPYHVRLDQAREKARGIAKIGTTGRGIGPAYEDKVARRGLRLGDMLHRERFASKLGEVLDYHNFVLTQYHHEAPVDFQRVLDEAMEIAEELRPMVCDTVSLVHDTRKAGENILFEGAQGSLLDIDHGTYPYVTSSNTTAGGTATGSGVGPLYLDYVLGITKAYTTRVGSGPFPTELFDEFGRHLAEKGHEFGATTGRARRCGWFDAVALRHAVQINSVSGLCLTKLDVLDGLENIRVCIGYRSKDGETIDTPVDSEGYEVIEPLYQDLPGWSESTLGVKRIEDLPNNARAYISFLEEQTGVPIDIISTGPDRNETIVLRNPFLD.

GTP is bound by residues 13–19 (GDEGKGK) and 41–43 (GHT). The Proton acceptor role is filled by Asp14. 2 residues coordinate Mg(2+): Asp14 and Gly41. Residues 14 to 17 (DEGK), 39 to 42 (NAGH), Thr130, Arg144, Gln225, Thr240, and Arg304 each bind IMP. Catalysis depends on His42, which acts as the Proton donor. Position 300–306 (300–306 (ATTGRAR)) interacts with substrate. GTP is bound by residues Arg306, 332-334 (KLD), and 414-416 (STG).

This sequence belongs to the adenylosuccinate synthetase family. In terms of assembly, homodimer. The cofactor is Mg(2+).

The protein localises to the cytoplasm. The catalysed reaction is IMP + L-aspartate + GTP = N(6)-(1,2-dicarboxyethyl)-AMP + GDP + phosphate + 2 H(+). Its pathway is purine metabolism; AMP biosynthesis via de novo pathway; AMP from IMP: step 1/2. In terms of biological role, plays an important role in the de novo pathway of purine nucleotide biosynthesis. Catalyzes the first committed step in the biosynthesis of AMP from IMP. The chain is Adenylosuccinate synthetase from Chromohalobacter salexigens (strain ATCC BAA-138 / DSM 3043 / CIP 106854 / NCIMB 13768 / 1H11).